The sequence spans 109 residues: Large ribosomal subunit protein eL42 (109 aa).

The tract at residues Val23–Lys53 is disordered. Over residues Lys28–Met43 the composition is skewed to basic and acidic residues.

It belongs to the eukaryotic ribosomal protein eL42 family.

The protein resides in the cytoplasm. The sequence is that of Large ribosomal subunit protein eL42 (RPL36A) from Tetrahymena thermophila (strain SB210).